The sequence spans 115 residues: NAD(P)H-quinone oxidoreductase subunit M (115 aa).

This sequence belongs to the complex I NdhM subunit family. As to quaternary structure, NDH-1 can be composed of about 15 different subunits; different subcomplexes with different compositions have been identified which probably have different functions.

It localises to the cellular thylakoid membrane. It catalyses the reaction a plastoquinone + NADH + (n+1) H(+)(in) = a plastoquinol + NAD(+) + n H(+)(out). The catalysed reaction is a plastoquinone + NADPH + (n+1) H(+)(in) = a plastoquinol + NADP(+) + n H(+)(out). Its function is as follows. NDH-1 shuttles electrons from an unknown electron donor, via FMN and iron-sulfur (Fe-S) centers, to quinones in the respiratory and/or the photosynthetic chain. The immediate electron acceptor for the enzyme in this species is believed to be plastoquinone. Couples the redox reaction to proton translocation, and thus conserves the redox energy in a proton gradient. Cyanobacterial NDH-1 also plays a role in inorganic carbon-concentration. This is NAD(P)H-quinone oxidoreductase subunit M from Parasynechococcus marenigrum (strain WH8102).